We begin with the raw amino-acid sequence, 101 residues long: Small ribosomal subunit protein uS14 (101 aa).

It belongs to the universal ribosomal protein uS14 family. As to quaternary structure, part of the 30S ribosomal subunit. Contacts proteins S3 and S10.

Its function is as follows. Binds 16S rRNA, required for the assembly of 30S particles and may also be responsible for determining the conformation of the 16S rRNA at the A site. This is Small ribosomal subunit protein uS14 from Ehrlichia canis (strain Jake).